The chain runs to 364 residues: Glycerol dehydrogenase (364 aa).

NAD(+)-binding residues include D37, G92, K93, T114, and S117. Residue D119 coordinates glycerol. Residues S123, L125, and Y129 each coordinate NAD(+). Positions 169, 252, and 269 each coordinate glycerol. Positions 169, 252, and 269 each coordinate Zn(2+).

This sequence belongs to the iron-containing alcohol dehydrogenase family. Requires Zn(2+) as cofactor.

It catalyses the reaction glycerol + NAD(+) = dihydroxyacetone + NADH + H(+). Its pathway is polyol metabolism; glycerol fermentation; glycerone phosphate from glycerol (oxidative route): step 1/2. In terms of biological role, catalyzes the NAD-dependent oxidation of glycerol to dihydroxyacetone (glycerone). The sequence is that of Glycerol dehydrogenase (gldA) from Thermotoga maritima (strain ATCC 43589 / DSM 3109 / JCM 10099 / NBRC 100826 / MSB8).